We begin with the raw amino-acid sequence, 87 residues long: Exodeoxyribonuclease 7 small subunit (87 aa).

This sequence belongs to the XseB family. Heterooligomer composed of large and small subunits.

The protein localises to the cytoplasm. It carries out the reaction Exonucleolytic cleavage in either 5'- to 3'- or 3'- to 5'-direction to yield nucleoside 5'-phosphates.. In terms of biological role, bidirectionally degrades single-stranded DNA into large acid-insoluble oligonucleotides, which are then degraded further into small acid-soluble oligonucleotides. The protein is Exodeoxyribonuclease 7 small subunit of Halorhodospira halophila (strain DSM 244 / SL1) (Ectothiorhodospira halophila (strain DSM 244 / SL1)).